The chain runs to 113 residues: Thioredoxin H-type (113 aa).

One can recognise a Thioredoxin domain in the interval 2-112; sequence GGSVIVIDSK…LKALVAKHAA (111 aa). Catalysis depends on nucleophile residues Cys37 and Cys40. Cysteines 37 and 40 form a disulfide.

It belongs to the thioredoxin family. Plant H-type subfamily.

The protein localises to the cytoplasm. In terms of biological role, participates in various redox reactions through the reversible oxidation of the active center dithiol to a disulfide. The H form is known to activate a number of cytosolic enzymes. The chain is Thioredoxin H-type (TRXH) from Chlamydomonas reinhardtii (Chlamydomonas smithii).